A 184-amino-acid polypeptide reads, in one-letter code: Oligoribonuclease (184 aa).

An Exonuclease domain is found at 8–169; sequence LIWIDLEMTG…EDIHESIIEL (162 aa). Tyrosine 129 is a catalytic residue.

It belongs to the oligoribonuclease family.

It localises to the cytoplasm. In terms of biological role, 3'-to-5' exoribonuclease specific for small oligoribonucleotides. This Buchnera aphidicola subsp. Schizaphis graminum (strain Sg) protein is Oligoribonuclease.